The sequence spans 98 residues: Bombyxin E-1 (98 aa).

Positions 1 to 19 (MNRPVFLVLLLTGFLCIAA) are cleaved as a signal peptide. Position 20 is a pyrrolidone carboxylic acid (Q20). 3 disulfides stabilise this stretch: C29-C85, C41-C98, and C84-C89. Residues 50–75 (SESSLASYSSRGWPWLPTPNFNKRAI) constitute a propeptide, c peptide like.

The protein belongs to the insulin family. Heterodimer of a B chain and an A chain linked by two disulfide bonds.

The protein resides in the secreted. PTTH is a brain peptide responsible for activation of prothoracic glands to produce ecdysone in insects. In Bombyx mori (Silk moth), this protein is Bombyxin E-1 (BBXE1).